Consider the following 356-residue polypeptide: Protein RecA (356 aa).

ATP is bound at residue 67–74 (GPESSGKT).

The protein belongs to the RecA family.

Its subcellular location is the cytoplasm. In terms of biological role, can catalyze the hydrolysis of ATP in the presence of single-stranded DNA, the ATP-dependent uptake of single-stranded DNA by duplex DNA, and the ATP-dependent hybridization of homologous single-stranded DNAs. It interacts with LexA causing its activation and leading to its autocatalytic cleavage. In Yersinia pestis bv. Antiqua (strain Angola), this protein is Protein RecA.